The following is a 367-amino-acid chain: Calcium uniporter protein, mitochondrial (367 aa).

Residues 1-12 constitute a mitochondrion transit peptide; it reads MAMPRVLCRVRL. Residues 13–232 lie on the Mitochondrial matrix side of the membrane; it reads LIHNDFSVIS…LEEKKLELEQ (220 aa). Residues 61 to 80 are disordered; the sequence is KQDASSSSSDSDSSDSDEDD. The stretch at 199-233 forms a coiled coil; it reads REHQLQKEVELTTQLETLQQELLPLEEKKLELEQV. The chain crosses the membrane as a helical span at residues 233–253; that stretch reads VANRRSNWMAWAGLGLMSVQF. Topologically, residues 254 to 262 are mitochondrial intermembrane; the sequence is GILARLTWW. Residues 263–284 form a helical membrane-spanning segment; sequence EYSWDIMEPVTYFVTYGTAMAA. Residues 266 to 276 carry the Selectivity filter motif; sequence WDIMEPVTYFV. Residue Glu270 participates in Ca(2+) binding. Over 285–367 the chain is Mitochondrial matrix; the sequence is YAYFVLTREE…KKQVEEKAKE (83 aa).

This sequence belongs to the MCU (TC 1.A.77) family. As to quaternary structure, homotetramer. Component of the uniplex complex, composed of MCU, EMRE, MICU1 and MICU2 in a 4:4:1:1 stoichiometry.

The protein localises to the mitochondrion inner membrane. The enzyme catalyses Ca(2+)(in) = Ca(2+)(out). Its activity is regulated as follows. MCU channel activity is regulated by the heterodimer composed of MICU1 and MICU2, which act as calcium-sensors. At low calcium levels, MICU1 occludes the pore of the MCU channel, preventing mitochondrial calcium uptake. At higher calcium levels, calcium-binding to MICU1 and MICU2 induces a conformational change that weakens MCU-MICU1 interactions and moves the MICU1-MICU2 heterodimer away from the pore, allowing calcium permeation through the channel. Functionally, channel-forming and calcium-conducting subunit of the mitochondrial inner membrane calcium uniporter complex (uniplex), which mediates calcium uptake into the mitochondrial matrix. MCU channel activity is regulated by the calcium-sensor subunits of the uniplex MICU1 and MICU2. Mitochondrial calcium homeostasis plays key roles in cellular physiology and regulates ATP production, cytoplasmic calcium signals and activation of cell death pathways. The chain is Calcium uniporter protein, mitochondrial from Tribolium castaneum (Red flour beetle).